The chain runs to 600 residues: Glutamine--fructose-6-phosphate aminotransferase [isomerizing] (600 aa).

Cysteine 2 (nucleophile; for GATase activity) is an active-site residue. The 216-residue stretch at 2–217 (CGIVGFIGEQ…DKEIVIVMKE (216 aa)) folds into the Glutamine amidotransferase type-2 domain. 2 SIS domains span residues 283–422 (IRNA…AKGE) and 452–590 (LAKQ…VDKP). The active-site For Fru-6P isomerization activity is lysine 595.

In terms of assembly, homodimer.

The protein resides in the cytoplasm. The enzyme catalyses D-fructose 6-phosphate + L-glutamine = D-glucosamine 6-phosphate + L-glutamate. Its function is as follows. Catalyzes the first step in hexosamine metabolism, converting fructose-6P into glucosamine-6P using glutamine as a nitrogen source. This chain is Glutamine--fructose-6-phosphate aminotransferase [isomerizing], found in Bacillus thuringiensis subsp. konkukian (strain 97-27).